We begin with the raw amino-acid sequence, 224 residues long: Uracil-DNA glycosylase (224 aa).

The active-site Proton acceptor is the aspartate 65.

This sequence belongs to the uracil-DNA glycosylase (UDG) superfamily. UNG family.

Its subcellular location is the cytoplasm. It carries out the reaction Hydrolyzes single-stranded DNA or mismatched double-stranded DNA and polynucleotides, releasing free uracil.. In terms of biological role, excises uracil residues from the DNA which can arise as a result of misincorporation of dUMP residues by DNA polymerase or due to deamination of cytosine. This is Uracil-DNA glycosylase from Buchnera aphidicola subsp. Baizongia pistaciae (strain Bp).